The sequence spans 386 residues: Methylthioribose-1-phosphate isomerase (386 aa).

Aspartate 255 (proton donor) is an active-site residue.

It belongs to the eIF-2B alpha/beta/delta subunits family. MtnA subfamily.

It is found in the cytoplasm. The protein resides in the nucleus. It catalyses the reaction 5-(methylsulfanyl)-alpha-D-ribose 1-phosphate = 5-(methylsulfanyl)-D-ribulose 1-phosphate. It participates in amino-acid biosynthesis; L-methionine biosynthesis via salvage pathway; L-methionine from S-methyl-5-thio-alpha-D-ribose 1-phosphate: step 1/6. Catalyzes the interconversion of methylthioribose-1-phosphate (MTR-1-P) into methylthioribulose-1-phosphate (MTRu-1-P). This Trypanosoma brucei brucei (strain 927/4 GUTat10.1) protein is Methylthioribose-1-phosphate isomerase.